We begin with the raw amino-acid sequence, 161 residues long: Nucleotide-binding protein Geob_0921 (161 aa).

Belongs to the YajQ family.

Functionally, nucleotide-binding protein. In Geotalea daltonii (strain DSM 22248 / JCM 15807 / FRC-32) (Geobacter daltonii), this protein is Nucleotide-binding protein Geob_0921.